We begin with the raw amino-acid sequence, 467 residues long: Glutamate--tRNA ligase (467 aa).

A 'HIGH' region motif is present at residues 15-25 (PSPTGYLHVGG). A 'KMSKS' region motif is present at residues 249–253 (KLSKR). Lys252 provides a ligand contact to ATP.

The protein belongs to the class-I aminoacyl-tRNA synthetase family. Glutamate--tRNA ligase type 1 subfamily. As to quaternary structure, monomer.

Its subcellular location is the cytoplasm. The catalysed reaction is tRNA(Glu) + L-glutamate + ATP = L-glutamyl-tRNA(Glu) + AMP + diphosphate. Catalyzes the attachment of glutamate to tRNA(Glu) in a two-step reaction: glutamate is first activated by ATP to form Glu-AMP and then transferred to the acceptor end of tRNA(Glu). The polypeptide is Glutamate--tRNA ligase (Coprothermobacter proteolyticus (strain ATCC 35245 / DSM 5265 / OCM 4 / BT)).